Consider the following 151-residue polypeptide: UPF0208 membrane protein YfbV (151 aa).

Residues 1-45 (MSTPDNRSVNFFSLFRRGQHYAKTWPMEKRLAPVFVENRVIRMTR) are Cytoplasmic-facing. A helical transmembrane segment spans residues 46–65 (YAIRFMPPVAVFTLCWQIAL). The Periplasmic portion of the chain corresponds to 66 to 68 (GGQ). Residues 69-91 (LGPAVATALFALSLPMQGLWWLG) traverse the membrane as a helical segment. The Cytoplasmic segment spans residues 92-151 (KRSLTPLPPSILNWFYEVRGKLQEAGQALAPVEGKPDYQALADTLKRAFKQLDKTFLDDL).

It belongs to the UPF0208 family.

The protein resides in the cell inner membrane. This Salmonella typhi protein is UPF0208 membrane protein YfbV (yfbV).